The primary structure comprises 516 residues: Cilia- and flagella-associated protein 53 (516 aa).

Coiled coils occupy residues 217–283 (EEKK…LQVK) and 316–440 (MQGY…RQMK). Basic and acidic residues-rich tracts occupy residues 417–436 (KELLESATEEHKQLETDRNA) and 461–472 (QAEREEEQREFE). Disordered stretches follow at residues 417–443 (KELLESATEEHKQLETDRNARQMKVAQ) and 455–475 (YQQSQRQAEREEEQREFEAGL).

It belongs to the CFAP53 family.

The protein resides in the cytoplasm. It localises to the cytoskeleton. Its subcellular location is the cilium axoneme. It is found in the microtubule organizing center. The protein localises to the centrosome. The protein resides in the centriolar satellite. In terms of biological role, microtubule inner protein (MIP) part of the dynein-decorated doublet microtubules (DMTs) in cilia axoneme, which is required for motile cilia beating. Regulates motility patterns of both 9+0 and 9+2 motile cilia through differential localization and recruitment of axonemal dynein components. Required for motile cilium formation and movement. Involved in the establishment of left-right symmetry during embryogenesis. The chain is Cilia- and flagella-associated protein 53 from Xenopus laevis (African clawed frog).